A 250-amino-acid chain; its full sequence is Small ribosomal subunit protein uS3 (250 aa).

One can recognise a KH type-2 domain in the interval 39–111 (IRTLIKNHYP…KIQINIFEVK (73 aa)).

This sequence belongs to the universal ribosomal protein uS3 family. In terms of assembly, part of the 30S ribosomal subunit. Forms a tight complex with proteins S10 and S14.

Binds the lower part of the 30S subunit head. Binds mRNA in the 70S ribosome, positioning it for translation. The protein is Small ribosomal subunit protein uS3 of Elm witches'-broom phytoplasma.